The primary structure comprises 420 residues: Reticulon-4 receptor-like 2 (420 aa).

Positions 1–30 are cleaved as a signal peptide; that stretch reads MLPGLRRLLQGPASACLLLTLLALPPVTPS. 2 disulfides stabilise this stretch: cysteine 31–cysteine 37 and cysteine 35–cysteine 46. The LRRNT domain maps to 31 to 60; sequence CPMLCTCYSSPPTVSCQANNFSSVPLSLPP. Asparagine 50 carries an N-linked (GlcNAc...) asparagine glycan. 8 LRR repeats span residues 61 to 82, 83 to 104, 107 to 129, 132 to 153, 156 to 177, 180 to 201, 204 to 225, and 228 to 249; these read STQRLFLQNNLIRSLRPGTFGP, NLLTLWLFSNNLSTIYPGTFRH, ALEELDLGDNRHLRSLEPDTFQG, RLQSLHLYRCQLSSLPGNIFRG, SLQYLYLQENSLLHLQDDLFAD, NLSHLFLHGNRLRLLTEHVFRG, SLDRLLLHGNRLQGVHRAAFHG, and RLTILYLFNNSLASLPGEALAD. A glycan (N-linked (GlcNAc...) asparagine) is linked at asparagine 93. Asparagine 236 carries N-linked (GlcNAc...) asparagine glycosylation. An LRRCT domain is found at 261–312; that stretch reads NPWACDCRARPLWAWFQRARVSSSDVTCATPPERQGRDLRTLRDTDFQACPP. 2 disulfide bridges follow: cysteine 265/cysteine 288 and cysteine 267/cysteine 310. The tract at residues 286 to 390 is disordered; sequence VTCATPPERQ…GEQTCPGAAC (105 aa). A compositionally biased stretch (basic and acidic residues) spans 294–306; the sequence is RQGRDLRTLRDTD. Positions 315–327 are important for interaction with MAG; that stretch reads PTRPGSRARGNSS. A compositionally biased stretch (basic and acidic residues) spans 351–360; that stretch reads LPAEDSRGRQ. Cysteine 390 carries GPI-anchor amidated cysteine lipidation. The propeptide at 391 to 420 is removed in mature form; the sequence is QAPADSRGPVLSAGLRTPLLCLLLLAPHHL.

This sequence belongs to the Nogo receptor family. In terms of assembly, interaction with MAG is controversial, and may be indirect. Interacts with MAG. Does not interact with OMG and RTN4. Post-translationally, undergoes zinc metalloproteinase-mediated ectodomain shedding in neuroblastoma cells; is released both as a full-length ectodomain and an N-terminal fragment containing the leucine-rich repeat (LRR) region of the protein. In terms of processing, N-glycosylated. O-glycosylated. Contains terminal sialic acid groups on its glycan chains. As to expression, detected in adult brain, in neocortex, hippocampus, striatum and dorsal root ganglion neurons, and in retina (at protein level). In brain, detected in cerebral cortex and hippocampus. Weak or no expression detected in the cerebellum, thalamus or striatum.

The protein resides in the cell membrane. The protein localises to the cell projection. Its subcellular location is the dendrite. It is found in the perikaryon. It localises to the axon. The protein resides in the membrane raft. Its function is as follows. Cell surface receptor that plays a functionally redundant role in the inhibition of neurite outgrowth mediated by MAG. Plays a functionally redundant role in postnatal brain development. Contributes to normal axon migration across the brain midline and normal formation of the corpus callosum. Does not seem to play a significant role in regulating axon regeneration in the adult central nervous system. Protects motoneurons against apoptosis; protection against apoptosis is probably mediated by MAG. Like other family members, plays a role in restricting the number dendritic spines and the number of synapses that are formed during brain development. Signaling mediates activation of Rho and downstream reorganization of the actin cytoskeleton. This chain is Reticulon-4 receptor-like 2, found in Rattus norvegicus (Rat).